The following is a 382-amino-acid chain: Putative 12-oxophytodienoate reductase 3 (382 aa).

FMN contacts are provided by residues 37–39 (PLT), Ala-70, and Gln-112. The segment covering 120-138 (STNDQQPNGQAPISSTDKQ) has biased composition (polar residues). A disordered region spans residues 120–147 (STNDQQPNGQAPISSTDKQITPDDSHTV). 184–187 (HGAH) serves as a coordination point for substrate. Tyr-189 (proton donor) is an active-site residue. Arg-236 contributes to the FMN binding site. Arg-277 lines the substrate pocket. FMN contacts are provided by residues Gly-307 and 328-329 (GR).

The protein belongs to the NADH:flavin oxidoreductase/NADH oxidase family. Requires FMN as cofactor.

Functionally, putative oxophytodienoate reductase that may be involved in the biosynthesis or metabolism of oxylipin signaling molecules. The protein is Putative 12-oxophytodienoate reductase 3 (OPR3) of Oryza sativa subsp. japonica (Rice).